The sequence spans 505 residues: Aspartyl/glutamyl-tRNA(Asn/Gln) amidotransferase subunit B (505 aa).

The protein belongs to the GatB/GatE family. GatB subfamily. In terms of assembly, heterotrimer of A, B and C subunits.

The enzyme catalyses L-glutamyl-tRNA(Gln) + L-glutamine + ATP + H2O = L-glutaminyl-tRNA(Gln) + L-glutamate + ADP + phosphate + H(+). It catalyses the reaction L-aspartyl-tRNA(Asn) + L-glutamine + ATP + H2O = L-asparaginyl-tRNA(Asn) + L-glutamate + ADP + phosphate + 2 H(+). Functionally, allows the formation of correctly charged Asn-tRNA(Asn) or Gln-tRNA(Gln) through the transamidation of misacylated Asp-tRNA(Asn) or Glu-tRNA(Gln) in organisms which lack either or both of asparaginyl-tRNA or glutaminyl-tRNA synthetases. The reaction takes place in the presence of glutamine and ATP through an activated phospho-Asp-tRNA(Asn) or phospho-Glu-tRNA(Gln). The sequence is that of Aspartyl/glutamyl-tRNA(Asn/Gln) amidotransferase subunit B from Haloarcula marismortui (strain ATCC 43049 / DSM 3752 / JCM 8966 / VKM B-1809) (Halobacterium marismortui).